A 221-amino-acid polypeptide reads, in one-letter code: Deoxyribose-phosphate aldolase (221 aa).

Asp89 serves as the catalytic Proton donor/acceptor. Catalysis depends on Lys151, which acts as the Schiff-base intermediate with acetaldehyde. Lys180 (proton donor/acceptor) is an active-site residue.

Belongs to the DeoC/FbaB aldolase family. DeoC type 1 subfamily.

It localises to the cytoplasm. It catalyses the reaction 2-deoxy-D-ribose 5-phosphate = D-glyceraldehyde 3-phosphate + acetaldehyde. It functions in the pathway carbohydrate degradation; 2-deoxy-D-ribose 1-phosphate degradation; D-glyceraldehyde 3-phosphate and acetaldehyde from 2-deoxy-alpha-D-ribose 1-phosphate: step 2/2. Functionally, catalyzes a reversible aldol reaction between acetaldehyde and D-glyceraldehyde 3-phosphate to generate 2-deoxy-D-ribose 5-phosphate. This Mesomycoplasma hyopneumoniae (strain 232) (Mycoplasma hyopneumoniae) protein is Deoxyribose-phosphate aldolase.